Reading from the N-terminus, the 817-residue chain is TPR repeat-containing protein C19B12.01 (817 aa).

2 disordered regions span residues 276-298 (DQKSLAPSEELDPILSSEDPNHP) and 386-413 (GKSPEGVDKPENDEGLGSFLPKPQDGEN). TPR repeat units lie at residues 459-492 (LQMWDCVVMCHCSLNRQDLAVQVIKRELENDPYD), 521-554 (APAQRSLGKYYYKKGDLLQAMNCFNESLKINPLS), 555-588 (YPTWFTYGCAALELQKYDAAMEAFSRCLSINPED), and 625-658 (WRIWENYMLISVDVNKWSEVIRALRRIIEIKGKD).

The chain is TPR repeat-containing protein C19B12.01 from Schizosaccharomyces pombe (strain 972 / ATCC 24843) (Fission yeast).